The following is a 451-amino-acid chain: Phosphoglucosamine mutase (451 aa).

The Phosphoserine intermediate role is filled by serine 102. Serine 102, aspartate 242, aspartate 244, and aspartate 246 together coordinate Mg(2+). Residue serine 102 is modified to Phosphoserine.

The protein belongs to the phosphohexose mutase family. Mg(2+) is required as a cofactor. Post-translationally, activated by phosphorylation.

It carries out the reaction alpha-D-glucosamine 1-phosphate = D-glucosamine 6-phosphate. Its function is as follows. Catalyzes the conversion of glucosamine-6-phosphate to glucosamine-1-phosphate. The polypeptide is Phosphoglucosamine mutase (Staphylococcus aureus (strain Mu3 / ATCC 700698)).